The following is a 590-amino-acid chain: Shugoshin (590 aa).

Positions 1-20 are disordered; sequence MPKRKIAPNKESSRRTVSHD. The segment covering 11 to 20 has biased composition (basic and acidic residues); it reads ESSRRTVSHD. The stretch at 25–86 forms a coiled coil; it reads QIQEFQNLMD…QENVTLRSKT (62 aa). Disordered regions lie at residues 133–235, 291–337, and 411–550; these read LRTM…QVEE, PSNP…HSMK, and RNRE…NSNI. Residues 173 to 185 show a composition bias toward basic and acidic residues; the sequence is SFNKDDGPDLEPK. Residues 302 to 326 show a composition bias toward low complexity; that stretch reads PSATLPTTTSDASTVYPSSSSSTNS. Residues 328–337 are compositionally biased toward basic residues; the sequence is PKTKIKHSMK. Positions 448–459 are enriched in basic and acidic residues; that stretch reads KKTEDEIHEDTA. Polar residues predominate over residues 513–526; sequence IVNNLSDENSTTRP. Positions 527–550 are enriched in low complexity; the sequence is SKSSKGTSNNNNNYNNFDNNNSNI.

The protein belongs to the shugoshin family. In terms of processing, ubiquitinated by the anaphase promoting complex (APC) at the onset of anaphase, conducting to its degradation.

The protein resides in the chromosome. Its subcellular location is the centromere. It localises to the kinetochore. The protein localises to the cytoplasm. It is found in the cytoskeleton. The protein resides in the spindle pole. In terms of biological role, plays a central role in chromosome cohesion during mitosis and meiosis divisions by preventing premature dissociation of cohesin complex from centromeres after prophase, when most of cohesin complex dissociates from chromosomes arms. Probably act by protecting REC8 and RAD21 from separase degradation during anaphase. Also acts as a spindle checkpoint component required for sensing tension between sister chromatids during mitosis, its degradation when they separate preventing cell cycle arrest and chromosome loss in anaphase, a time when sister chromatids are no longer under tension. The polypeptide is Shugoshin (SGO1) (Saccharomyces cerevisiae (strain ATCC 204508 / S288c) (Baker's yeast)).